We begin with the raw amino-acid sequence, 741 residues long: Protein ACCUMULATION AND REPLICATION OF CHLOROPLASTS 3, chloroplastic (741 aa).

The N-terminal 41 residues, 1 to 41, are a transit peptide targeting the chloroplast; it reads MPISMELPVFSTLRVPLFSRLALLPTFGVPFSSLGATTRLN. Disordered regions lie at residues 444–465 and 539–558; these read ENGD…SRLD and DSRE…SSDT. Residues 451 to 465 are compositionally biased toward basic and acidic residues; sequence YPLKEGEPSRNSRLD. The segment covering 546-558 has biased composition (polar residues); it reads FNPNGSTKDSSDT. MORN repeat units follow at residues 612–628, 630–652, and 653–675; these read QGGL…GDGS, YDGM…NGDV, and FQGT…KGDR.

As to quaternary structure, self-interacts. Interacts with FTSZ, CDP1/PARC6 (via N-terminus), MIND1 and MINE1. Part of a complex made of ARC3, ARC6, FTSZ1 and FTSZ2. Recruited to the middle of the plastid by CDP1/PARC6 where subsequent complex made of CDP1/PARC6, ARC3 and FtsZ proteins can form; this complex enhances the dynamics of Z rings during chloroplast division. Binding to FTSZ2-1 is enabled by ARC6.

The protein localises to the plastid. It is found in the chloroplast outer membrane. The protein resides in the chloroplast stroma. In terms of biological role, together with MIND1 and MCD1, regulates FtsZ ring positioning in chloroplasts in an ARC6-dependent manner. Z-ring accessory protein involved in the initiation of plastid division and division site placement (might functionally replace bacterial MinC). Acts as a disassembly factor that accelerates fragmentation and depolymerization of existing FtsZ2 filaments by enhancing FTSZ2 GTPase activity, thus leading to the conversion of FTSZ2 bound GTP into GDP, a process which triggers FtsZ2 filaments destabilization. Prevents misplaced Z-ring formation at chloroplast stroma nondivision sites. May control the rate of chloroplast expansion. Seems to influence stromule (stroma-filled tubular extensions of the plastid envelope membrane) length and frequency. The protein is Protein ACCUMULATION AND REPLICATION OF CHLOROPLASTS 3, chloroplastic of Arabidopsis thaliana (Mouse-ear cress).